We begin with the raw amino-acid sequence, 562 residues long: NAD-dependent malic enzyme (562 aa).

The Proton donor role is filled by Y101. Residue R154 coordinates NAD(+). K172 serves as the catalytic Proton acceptor. Positions 243, 244, and 267 each coordinate a divalent metal cation. The NAD(+) site is built by D267 and N415.

Belongs to the malic enzymes family. Homotetramer. The cofactor is Mg(2+). It depends on Mn(2+) as a cofactor.

It catalyses the reaction (S)-malate + NAD(+) = pyruvate + CO2 + NADH. The enzyme catalyses oxaloacetate + H(+) = pyruvate + CO2. The polypeptide is NAD-dependent malic enzyme (Shewanella loihica (strain ATCC BAA-1088 / PV-4)).